We begin with the raw amino-acid sequence, 502 residues long: Acetylcholine receptor subunit alpha-type unc-63 (502 aa).

Positions 1–23 (MGPNDHGFAYILIFLLLSPPTHA) are cleaved as a signal peptide. The Extracellular portion of the chain corresponds to 24-263 (NRDANRLFED…HLRRKTLFYT (240 aa)). N-linked (GlcNAc...) asparagine glycosylation occurs at asparagine 136. Residues cysteine 151 and cysteine 165 are joined by a disulfide bond. 3 helical membrane passes run 264–284 (VNLI…FYLP), 293–313 (LCIS…EIIP), and 326–346 (LLFT…TLNV). Residues 347–470 (HYRSPTTHTM…WKYISVVMDR (124 aa)) lie on the Cytoplasmic side of the membrane. Residues 471–491 (IFLITFTFACAFGTVVIIARA) traverse the membrane as a helical segment.

It belongs to the ligand-gated ion channel (TC 1.A.9) family. Acetylcholine receptor (TC 1.A.9.1) subfamily. In terms of assembly, component of nicotinic acetylcholine receptor. In muscles, composed of 2 non-alpha subunits lev-1 and unc-29, and 3 alpha subunits unc-38, unc-63 and lev-8. In cholinergic motoneurons, composed of 2 non-alpha subunits acr-2 and acr-3, and 3 alpha subunits unc-38, unc-63 and acr-12. Interacts with lev-10. Expressed in body wall muscles, in vulval muscles and in neurons.

The protein resides in the postsynaptic cell membrane. It is found in the cell membrane. Functionally, alpha subunit of nicotinic acetylcholine receptor (nAChR). Probably acts in cholinergic motoneurons to regulate presynaptic neurotransmitter release, thereby ensuring normal level of excitation of cholinergic motoneurons during locomotion. Involved in nAChR sensitivity to nicotine and levamisole. This chain is Acetylcholine receptor subunit alpha-type unc-63 (unc-63), found in Caenorhabditis elegans.